The chain runs to 308 residues: MNSESQPTIITLMGPTASGKTALAMALAEQHNCEIISVDSALIYRDMDIGSAKPTQEELSRAPHRLIDIRDPSESYSAADFRSDAIANIEAILAAGKTPLLVGGTMLYFKALLEGLSPLPSADEAIRAEIAKEVEAKGWQALHDELRQIDPVSADRIHPNDPQRLSRAIEVYRISGKSLTELTQVKAEALPYKVVQFGIAPKDRKVLHLAIAERFKLMLNQGFVEEVQRLKARADLHLDLPSMRCVGYRQVWQYLDGEYDYDTMVEKSIVATRQLAKRQLTWLRGWADLNWLESGDESNLARLLEHCR.

Residue 14–21 coordinates ATP; it reads GPTASGKT. 16-21 lines the substrate pocket; the sequence is TASGKT. Interaction with substrate tRNA stretches follow at residues 39–42, 163–167, and 244–249; these read DSAL, QRLSR, and RCVGYR.

Belongs to the IPP transferase family. In terms of assembly, monomer. It depends on Mg(2+) as a cofactor.

It carries out the reaction adenosine(37) in tRNA + dimethylallyl diphosphate = N(6)-dimethylallyladenosine(37) in tRNA + diphosphate. Catalyzes the transfer of a dimethylallyl group onto the adenine at position 37 in tRNAs that read codons beginning with uridine, leading to the formation of N6-(dimethylallyl)adenosine (i(6)A). This Shewanella loihica (strain ATCC BAA-1088 / PV-4) protein is tRNA dimethylallyltransferase.